Here is a 343-residue protein sequence, read N- to C-terminus: Autoinducer 2 import system permease protein LsrC (343 aa).

The next 9 membrane-spanning stretches (helical) occupy residues 13–33 (FLAILALFGVLVALNPAYLSF), 38–58 (MIFASSQILILLALGAALVML), 61–81 (NIDVSVGSTVGLCAIAVGVAL), 92–112 (LFALAIGALAGAFNGLLVVGL), 114–134 (IPAIVATLGTLGLYRGAMLLW), 154–174 (VALGVSPLGMAVLFLVLIGAW), 212–232 (INGMLAACAGIVFASQIGFVP), 251–271 (GISLLGGTGTLIGAFLGAFFL), and 283–303 (LPAWWNDFIAGLVLLGVLVLD). Residues 321–343 (RFQPGNKGGKHVTPFPKRKKEVA) are disordered.

Belongs to the binding-protein-dependent transport system permease family. AraH/RbsC subfamily. In terms of assembly, the complex is composed of two ATP-binding proteins (LsrA), two transmembrane proteins (LsrC and LsrD) and a solute-binding protein (LsrB).

It localises to the cell inner membrane. Functionally, part of the ABC transporter complex LsrABCD involved in autoinducer 2 (AI-2) import. Probably responsible for the translocation of the substrate across the membrane. The protein is Autoinducer 2 import system permease protein LsrC (lsrC) of Enterobacter sp. (strain 638).